Here is a 168-residue protein sequence, read N- to C-terminus: uncharacterized protein (168 aa).

In terms of domain architecture, N-acetyltransferase spans 7–168 (ERIDTLKTGD…TAKGWPDISM (162 aa)).

This is an uncharacterized protein from Azospirillum brasilense.